We begin with the raw amino-acid sequence, 90 residues long: Molybdopterin synthase sulfur carrier subunit (90 aa).

Glycine 90 carries the post-translational modification 1-thioglycine; alternate. Position 90 is a glycyl adenylate; alternate (glycine 90).

It belongs to the MoaD family. MOCS2A subfamily. In terms of assembly, heterotetramer; composed of 2 small (Mocs2A) and 2 large (Mocs2B) subunits. In terms of processing, C-terminal thiocarboxylation occurs in 2 steps, it is first acyl-adenylated (-COAMP) via the hesA/moeB/thiF part of MOCS3, then thiocarboxylated (-COSH) via the rhodanese domain of MOCS3.

It localises to the cytoplasm. It functions in the pathway cofactor biosynthesis; molybdopterin biosynthesis. In terms of biological role, acts as a sulfur carrier required for molybdopterin biosynthesis. Component of the molybdopterin synthase complex that catalyzes the conversion of precursor Z into molybdopterin by mediating the incorporation of 2 sulfur atoms into precursor Z to generate a dithiolene group. In the complex, serves as sulfur donor by being thiocarboxylated (-COSH) at its C-terminus by MOCS3. After interaction with Mocs2B, the sulfur is then transferred to precursor Z to form molybdopterin. In Drosophila simulans (Fruit fly), this protein is Molybdopterin synthase sulfur carrier subunit.